The primary structure comprises 492 residues: Protein adenylyltransferase Fic (492 aa).

Residues 1–18 show a composition bias toward low complexity; sequence MGTEAEQPSPPAQQQDQE. The interval 1–26 is disordered; that stretch reads MGTEAEQPSPPAQQQDQENPPLCKAQ. Residues 33–55 form a helical membrane-spanning segment; that stretch reads LYRFVLIFVAGSLAAWTFHALSS. TPR repeat units lie at residues 118–151 and 152–186; these read ALGA…APRH and PEVL…SPSN. Positions 243–248 match the Inhibitory (S/T)XXXE(G/N) motif motif; it reads SVGIEG. ATP contacts are provided by residues glutamate 247 and 328–331; that span reads VGGH. One can recognise a Fido domain in the interval 297-432; the sequence is ITIKDILELH…IRPFVRFIAD (136 aa). Residue histidine 375 is part of the active site. Residues 379 to 386, 411 to 412, and asparagine 419 contribute to the ATP site; these read DGNGRTSR and YY.

It belongs to the fic family. Homodimer; homodimerization may regulate adenylyltransferase and phosphodiesterase activities.

The protein resides in the membrane. It carries out the reaction L-tyrosyl-[protein] + ATP = O-(5'-adenylyl)-L-tyrosyl-[protein] + diphosphate. It catalyses the reaction L-threonyl-[protein] + ATP = 3-O-(5'-adenylyl)-L-threonyl-[protein] + diphosphate. The enzyme catalyses 3-O-(5'-adenylyl)-L-threonyl-[protein] + H2O = L-threonyl-[protein] + AMP + H(+). Its activity is regulated as follows. The side chain of Glu-247 determines which of the two opposing activities (AMPylase or de-AMPylase) will take place. In response to endoplasmic reticulum stress, mediates de-AMPylase activity. Adenylyltransferase activity is inhibited by the inhibitory helix present at the N-terminus: Glu-247 binds ATP and competes with ATP-binding at Arg-386, thereby preventing adenylyltransferase activity. In unstressed cells, disengagement of Glu-247 promotes adenylyltransferase activity. Activation dissociates ATP-binding from Glu-247, allowing ordered binding of the entire ATP moiety with the alpha-phosphate in an orientation that is productive for accepting an incoming target hydroxyl side chain. In terms of biological role, protein that can both mediate the addition of adenosine 5'-monophosphate (AMP) to specific residues of target proteins (AMPylation), and the removal of the same modification from target proteins (de-AMPylation), depending on the context. The side chain of Glu-247 determines which of the two opposing activities (AMPylase or de-AMPylase) will take place. Acts as a key regulator of the unfolded protein response (UPR) by mediating AMPylation or de-AMPylation of Hsc70-3/BiP. In unstressed cells, acts as an adenylyltransferase by mediating AMPylation of Hsc70-3/BiP at 'Thr-518', thereby inactivating it. In response to endoplasmic reticulum stress, acts as a phosphodiesterase by mediating removal of ATP (de-AMPylation) from Hsc70-3/BiP at 'Thr-518', leading to restore HSPA5/BiP activity. The chain is Protein adenylyltransferase Fic from Drosophila melanogaster (Fruit fly).